Reading from the N-terminus, the 495-residue chain is MLLLELKKTNQTLGTIHFIGIGGVGMSGIAEILHNLGYKVQGSDLVENYNTKRLESYGIKIFLGQAKQNIKNVSYVVISSAINQNNPEIKEALERKIPIIRRAEMLAELMRLKCSVAVSGSHGKTTTTSLIACLFEAAGLCPTVINGGIINNKSTNAYLGSSNYLIAEADESDATFIHIPSTIAIITNIDPEHLDYYQDFEILIGAFRSFITNLPFYGFAVCCIDHKIVRKLVDDITERKIITYGIDSEDAHIIAFNINTDIASSTFDVKISLPNVLGTTIIEKITIPTPGRHNILNSLAAIAVGIELDFGIKAIKNGFNNFKGVKRRFTKVAEYNKAVIIDDYAHHPEEIKATLATAKNIANQQNGKVIAIFQPHRYSRIKYLFDDFMLCFADADILYITNIYAAGETPIEGITGQSLVDKMTQNKHHDKANFLAELDDVVSIIIDNAASGDMIIMMGAGNISSFANELDRRLLSHEILENTDCDTKSNDKVMQ.

Gly-120 to Thr-126 is an ATP binding site.

It belongs to the MurCDEF family.

The protein resides in the cytoplasm. The catalysed reaction is UDP-N-acetyl-alpha-D-muramate + L-alanine + ATP = UDP-N-acetyl-alpha-D-muramoyl-L-alanine + ADP + phosphate + H(+). Its pathway is cell wall biogenesis; peptidoglycan biosynthesis. Functionally, cell wall formation. The chain is UDP-N-acetylmuramate--L-alanine ligase from Rickettsia prowazekii (strain Madrid E).